Reading from the N-terminus, the 330-residue chain is Class III chitinase ARB_03514 (330 aa).

The signal sequence occupies residues 1-22 (MSSVKNILSFVALFAGVKTAYA). Positions 23-314 (GLNSPGHNNV…SAVKGALSAG (292 aa)) constitute a GH18 domain. 2 N-linked (GlcNAc...) asparagine glycosylation sites follow: asparagine 61 and asparagine 135. Glutamate 155 (proton donor) is an active-site residue. N-linked (GlcNAc...) asparagine glycans are attached at residues asparagine 278 and asparagine 302.

The protein belongs to the glycosyl hydrolase 18 family. Chitinase class III subfamily. Monomer.

Its subcellular location is the secreted. It catalyses the reaction Random endo-hydrolysis of N-acetyl-beta-D-glucosaminide (1-&gt;4)-beta-linkages in chitin and chitodextrins.. In terms of biological role, secreted chitinase involved in the degradation of chitin, a component of the cell walls of fungi and exoskeletal elements of some animals (including worms and arthropods). Plays a morphogenetic role during apical growth, cell division and differentiation (cell wall morphogenesis). In Arthroderma benhamiae (strain ATCC MYA-4681 / CBS 112371) (Trichophyton mentagrophytes), this protein is Class III chitinase ARB_03514.